We begin with the raw amino-acid sequence, 523 residues long: Probable lipid II flippase MurJ (523 aa).

A run of 12 helical transmembrane segments spans residues 98–118, 146–166, 170–190, 201–221, 246–266, 284–304, 328–348, 360–380, 395–415, 422–442, 461–481, and 489–509; these read AFYS…IVYV, IMFG…ILNA, FGLP…FTFM, GLAW…AVAL, MLPG…NLYF, LLEL…LPTL, LFLA…IIEV, VQMT…VSCS, VPMV…PVLM, GLMI…MGLL, FVLA…LMAQ, and LALF…AYVL.

This sequence belongs to the MurJ/MviN family.

The protein resides in the cell inner membrane. The protein operates within cell wall biogenesis; peptidoglycan biosynthesis. In terms of biological role, involved in peptidoglycan biosynthesis. Transports lipid-linked peptidoglycan precursors from the inner to the outer leaflet of the cytoplasmic membrane. The sequence is that of Probable lipid II flippase MurJ from Bdellovibrio bacteriovorus (strain ATCC 15356 / DSM 50701 / NCIMB 9529 / HD100).